Consider the following 705-residue polypeptide: uncharacterized protein (705 aa).

Active-site charge relay system residues include S554 and H676.

Belongs to the peptidase S9A family.

This is an uncharacterized protein from Sinorhizobium fredii (strain NBRC 101917 / NGR234).